A 174-amino-acid chain; its full sequence is Large ribosomal subunit protein uL10 (174 aa).

This sequence belongs to the universal ribosomal protein uL10 family. As to quaternary structure, part of the ribosomal stalk of the 50S ribosomal subunit. The N-terminus interacts with L11 and the large rRNA to form the base of the stalk. The C-terminus forms an elongated spine to which L12 dimers bind in a sequential fashion forming a multimeric L10(L12)X complex.

Forms part of the ribosomal stalk, playing a central role in the interaction of the ribosome with GTP-bound translation factors. This chain is Large ribosomal subunit protein uL10, found in Nitrosospira multiformis (strain ATCC 25196 / NCIMB 11849 / C 71).